We begin with the raw amino-acid sequence, 95 residues long: Aspartyl/glutamyl-tRNA(Asn/Gln) amidotransferase subunit C (95 aa).

The protein belongs to the GatC family. Heterotrimer of A, B and C subunits.

It catalyses the reaction L-glutamyl-tRNA(Gln) + L-glutamine + ATP + H2O = L-glutaminyl-tRNA(Gln) + L-glutamate + ADP + phosphate + H(+). It carries out the reaction L-aspartyl-tRNA(Asn) + L-glutamine + ATP + H2O = L-asparaginyl-tRNA(Asn) + L-glutamate + ADP + phosphate + 2 H(+). Allows the formation of correctly charged Asn-tRNA(Asn) or Gln-tRNA(Gln) through the transamidation of misacylated Asp-tRNA(Asn) or Glu-tRNA(Gln) in organisms which lack either or both of asparaginyl-tRNA or glutaminyl-tRNA synthetases. The reaction takes place in the presence of glutamine and ATP through an activated phospho-Asp-tRNA(Asn) or phospho-Glu-tRNA(Gln). The polypeptide is Aspartyl/glutamyl-tRNA(Asn/Gln) amidotransferase subunit C (Chlorobium chlorochromatii (strain CaD3)).